We begin with the raw amino-acid sequence, 251 residues long: Tachykinins (251 aa).

A signal peptide spans 1–21; it reads MGAPRTCLIFITIQLVSLAYA. The propeptide occupies 22–25; sequence QEVS. The residue at position 36 (Arg36) is an Arginine amide. A propeptide spanning residues 39–50 is cleaved from the precursor; that stretch reads KYFDEEGIEQFY. The residue at position 61 (Lys61) is a Lysine amide. The propeptide occupies 65–163; the sequence is SLQDILEAPE…MEPEQSNDLD (99 aa). Arginine amide is present on Arg176. Residues 180 to 183 constitute a propeptide that is removed on maturation; it reads SINN. Arg199 is subject to Arginine amide. The propeptide occupies 203-223; sequence DLKNSNAHEIKFLVDQNGPLP. Position 235 is an arginine amide (Arg235). Residues 239-251 constitute a propeptide that is removed on maturation; that stretch reads WTDEPSLEMDMPN.

The protein belongs to the tachykinin family. In terms of tissue distribution, tachykinin-related peptide 1: Expressed in antennal lobe (AL) and gnathal ganglion (GNG) (at protein level). Expression in AL detected in all animals, in GNG in most animals (at protein level). Not expressed in corpora cardiaca (CC) and corpora allata (CA) (at protein level). Tachykinin-related peptide 2: Expressed in antennal lobe (AL) corpora cardiaca (CC) and corpora allata (CA) with expression detected in few animals (at protein level). Not expressed in gnathal ganglion (GNG) (at protein level). Tachykinin-related peptide 4: Expressed in corpora cardiaca (CC), corpora allata (CA), antennal lobe (AL) and gnathal ganglion (GNG) (at protein level). Expression in AL and GNG detected in most animals, in CC and CA detected in few animals (at protein level). Tachykinin-related peptide 5: Expressed in corpora cardiaca (CC), corpora allata (CA), antennal lobe (AL) and gnathal ganglion (GNG) (at protein level). Expression in CC and CA detected in some animals, in AL and GNG in few animals (at protein level). Tachykinin-related peptide 6: Expressed in antennal lobe (AL) and gnathal ganglion (GNG) (at protein level). Expression in AL detected in all animals, in GNG in some animals (at protein level). Not expressed in corpora cardiaca (CC) and corpora allata (CA) (at protein level).

It localises to the secreted. Its function is as follows. Tachykinins are active peptides which excite neurons, evoke behavioral responses, are potent vasodilators and secretagogues, and contract (directly or indirectly) many smooth muscles. This is Tachykinins from Agrotis ipsilon (Black cutworm moth).